We begin with the raw amino-acid sequence, 474 residues long: Bifunctional protein HldE (474 aa).

The tract at residues 1–318 is ribokinase; the sequence is MKMTLPDFHC…ENAIRGRAET (318 aa). 195 to 198 serves as a coordination point for ATP; sequence NLSE. Asp264 is an active-site residue. The cytidylyltransferase stretch occupies residues 344-474; it reads MTNGCFDILH…TNIIKAIKNQ (131 aa).

In the N-terminal section; belongs to the carbohydrate kinase PfkB family. This sequence in the C-terminal section; belongs to the cytidylyltransferase family. Homodimer.

It catalyses the reaction D-glycero-beta-D-manno-heptose 7-phosphate + ATP = D-glycero-beta-D-manno-heptose 1,7-bisphosphate + ADP + H(+). The catalysed reaction is D-glycero-beta-D-manno-heptose 1-phosphate + ATP + H(+) = ADP-D-glycero-beta-D-manno-heptose + diphosphate. It functions in the pathway nucleotide-sugar biosynthesis; ADP-L-glycero-beta-D-manno-heptose biosynthesis; ADP-L-glycero-beta-D-manno-heptose from D-glycero-beta-D-manno-heptose 7-phosphate: step 1/4. Its pathway is nucleotide-sugar biosynthesis; ADP-L-glycero-beta-D-manno-heptose biosynthesis; ADP-L-glycero-beta-D-manno-heptose from D-glycero-beta-D-manno-heptose 7-phosphate: step 3/4. It participates in bacterial outer membrane biogenesis; LPS core biosynthesis. Functionally, catalyzes the phosphorylation of D-glycero-D-manno-heptose 7-phosphate at the C-1 position to selectively form D-glycero-beta-D-manno-heptose-1,7-bisphosphate. Catalyzes the ADP transfer from ATP to D-glycero-beta-D-manno-heptose 1-phosphate, yielding ADP-D-glycero-beta-D-manno-heptose. This Photorhabdus laumondii subsp. laumondii (strain DSM 15139 / CIP 105565 / TT01) (Photorhabdus luminescens subsp. laumondii) protein is Bifunctional protein HldE.